Consider the following 662-residue polypeptide: Phosphomethylpyrimidine synthase (662 aa).

Substrate contacts are provided by residues Asn-235, Met-264, Tyr-293, His-329, 349-351 (SRG), 390-393 (DGMR), and Glu-429. Zn(2+) is bound at residue His-433. Residue Tyr-456 coordinates substrate. Residue His-497 coordinates Zn(2+). [4Fe-4S] cluster contacts are provided by Cys-577, Cys-580, and Cys-585.

The protein belongs to the ThiC family. In terms of assembly, homodimer. Requires [4Fe-4S] cluster as cofactor.

The catalysed reaction is 5-amino-1-(5-phospho-beta-D-ribosyl)imidazole + S-adenosyl-L-methionine = 4-amino-2-methyl-5-(phosphooxymethyl)pyrimidine + CO + 5'-deoxyadenosine + formate + L-methionine + 3 H(+). The protein operates within cofactor biosynthesis; thiamine diphosphate biosynthesis. Its function is as follows. Catalyzes the synthesis of the hydroxymethylpyrimidine phosphate (HMP-P) moiety of thiamine from aminoimidazole ribotide (AIR) in a radical S-adenosyl-L-methionine (SAM)-dependent reaction. The chain is Phosphomethylpyrimidine synthase from Shewanella halifaxensis (strain HAW-EB4).